Consider the following 288-residue polypeptide: Quinate/shikimate dehydrogenase (288 aa).

Positions 71 and 107 each coordinate substrate. NAD(+) contacts are provided by residues 132-135 (AGGA), 155-158 (NRRD), Lys-205, 232-235 (CVYN), and Gly-255.

Belongs to the shikimate dehydrogenase family. As to quaternary structure, homodimer.

It carries out the reaction L-quinate + NAD(+) = 3-dehydroquinate + NADH + H(+). The catalysed reaction is L-quinate + NADP(+) = 3-dehydroquinate + NADPH + H(+). The enzyme catalyses shikimate + NADP(+) = 3-dehydroshikimate + NADPH + H(+). It catalyses the reaction shikimate + NAD(+) = 3-dehydroshikimate + NADH + H(+). The protein operates within metabolic intermediate biosynthesis; chorismate biosynthesis; chorismate from D-erythrose 4-phosphate and phosphoenolpyruvate: step 4/7. The actual biological function of YdiB remains unclear, nor is it known whether 3-dehydroshikimate or quinate represents the natural substrate. Catalyzes the reversible NAD-dependent reduction of both 3-dehydroshikimate (DHSA) and 3-dehydroquinate to yield shikimate (SA) and quinate, respectively. It can use both NAD or NADP for catalysis, however it has higher catalytic efficiency with NAD. This chain is Quinate/shikimate dehydrogenase, found in Escherichia coli (strain SMS-3-5 / SECEC).